Reading from the N-terminus, the 274-residue chain is 23S rRNA (adenosine(1067)-2'-O)-methyltransferase (274 aa).

S-adenosyl-L-methionine-binding positions include R165, L195, 218 to 220 (GSE), 238 to 240 (IPM), and 247 to 252 (LNVSVS).

The protein belongs to the class IV-like SAM-binding methyltransferase superfamily. RNA methyltransferase TsnR/AvirB family. Homodimer.

It catalyses the reaction adenosine(1067) in 23S rRNA + S-adenosyl-L-methionine = 2'-O-methyladenosine(1067) in 23S rRNA + S-adenosyl-L-homocysteine + H(+). Specifically methylates the adenosine-1067 in 23S ribosomal RNA. Confers resistance to antibiotic nosiheptide. The protein is 23S rRNA (adenosine(1067)-2'-O)-methyltransferase of Streptomyces actuosus.